A 199-amino-acid chain; its full sequence is Tegument protein UL14 homolog (199 aa).

Positions 176-191 are enriched in polar residues; the sequence is TDMNQMQPQPISKNEN. The disordered stretch occupies residues 176 to 199; sequence TDMNQMQPQPISKNENPPTPHTDV.

Belongs to the alphaherpesvirinae HHV-1 UL14 protein family.

It is found in the virion tegument. Its subcellular location is the host cytoplasm. The protein localises to the host nucleus. Functionally, contributes to the nuclear transport of the viral transcriptional activator VP16 homolog during the early phase of infection. Therefore, participates indirectly in the regulation of the immediate-early gene expression. Additionally, seems to be important for efficient nuclear targeting of capsids. The protein is Tegument protein UL14 homolog of Varicella-zoster virus (strain Dumas) (HHV-3).